The sequence spans 250 residues: Peptidyl-tRNA hydrolase, mitochondrial (250 aa).

Residues 1–45 (MRLLSGASASRIPCPLLSLARARARCLPVPASATACRAASSSAAA) constitute a mitochondrion transit peptide. Tyr-68 serves as a coordination point for tRNA. The active-site Proton acceptor is His-73. 3 residues coordinate tRNA: Phe-118, Asn-120, and Asn-166.

Belongs to the PTH family.

The protein resides in the mitochondrion. It carries out the reaction an N-acyl-L-alpha-aminoacyl-tRNA + H2O = an N-acyl-L-amino acid + a tRNA + H(+). In terms of biological role, the natural substrate for this enzyme may be peptidyl-tRNAs which drop off the ribosome during protein synthesis. In Oryza sativa subsp. japonica (Rice), this protein is Peptidyl-tRNA hydrolase, mitochondrial.